The primary structure comprises 381 residues: Cytochrome b (381 aa).

A run of 4 helical transmembrane segments spans residues 33 to 53 (FGSLLGMCLIIQILTGLFLAM), 77 to 98 (WLLRNLHANGASMFFMCLFLHV), 113 to 133 (WNIGVILLLTVMATAFVGYVL), and 178 to 198 (FFAFHFILPFIIMALAVVHLL). H83 and H97 together coordinate heme b. 2 residues coordinate heme b: H182 and H196. H201 provides a ligand contact to a ubiquinone. The next 4 helical transmembrane spans lie at 226-246 (IKDALGFMLLLLVLLLLALFS), 288-308 (LGGVLAVLASILILLIIPLLH), 320-340 (VSQTLFWILTANLITLTWIGG), and 347-367 (FIIIGQLAPMPYFLLILVMMP).

Belongs to the cytochrome b family. In terms of assembly, the cytochrome bc1 complex contains 11 subunits: 3 respiratory subunits (MT-CYB, CYC1 and UQCRFS1), 2 core proteins (UQCRC1 and UQCRC2) and 6 low-molecular weight proteins (UQCRH/QCR6, UQCRB/QCR7, UQCRQ/QCR8, UQCR10/QCR9, UQCR11/QCR10 and a cleavage product of UQCRFS1). This cytochrome bc1 complex then forms a dimer. Requires heme b as cofactor.

The protein resides in the mitochondrion inner membrane. Component of the ubiquinol-cytochrome c reductase complex (complex III or cytochrome b-c1 complex) that is part of the mitochondrial respiratory chain. The b-c1 complex mediates electron transfer from ubiquinol to cytochrome c. Contributes to the generation of a proton gradient across the mitochondrial membrane that is then used for ATP synthesis. The chain is Cytochrome b (MT-CYB) from Dasyurus hallucatus (Northern quoll).